A 508-amino-acid chain; its full sequence is Photosystem II CP47 reaction center protein (508 aa).

6 helical membrane passes run 21-36 (SVHI…WAGS), 101-115 (IVFS…IWHW), 140-156 (GIHL…FGAF), 203-218 (IAAG…FHLS), 237-252 (VLSS…AFVV), and 457-472 (SFAL…HGAR).

It belongs to the PsbB/PsbC family. PsbB subfamily. In terms of assembly, PSII is composed of 1 copy each of membrane proteins PsbA, PsbB, PsbC, PsbD, PsbE, PsbF, PsbH, PsbI, PsbJ, PsbK, PsbL, PsbM, PsbT, PsbX, PsbY, PsbZ, Psb30/Ycf12, at least 3 peripheral proteins of the oxygen-evolving complex and a large number of cofactors. It forms dimeric complexes. Binds multiple chlorophylls. PSII binds additional chlorophylls, carotenoids and specific lipids. is required as a cofactor.

Its subcellular location is the plastid. It is found in the chloroplast thylakoid membrane. One of the components of the core complex of photosystem II (PSII). It binds chlorophyll and helps catalyze the primary light-induced photochemical processes of PSII. PSII is a light-driven water:plastoquinone oxidoreductase, using light energy to abstract electrons from H(2)O, generating O(2) and a proton gradient subsequently used for ATP formation. This Nuphar advena (Common spatterdock) protein is Photosystem II CP47 reaction center protein.